The following is a 400-amino-acid chain: Acetate kinase (400 aa).

Asparagine 10 lines the Mg(2+) pocket. Residue lysine 17 coordinates ATP. Arginine 91 is a substrate binding site. Aspartate 150 serves as the catalytic Proton donor/acceptor. Residues 210 to 214, 285 to 287, and 333 to 337 each bind ATP; these read HLGNG, DCR, and GIGEN. Mg(2+) is bound at residue glutamate 387.

The protein belongs to the acetokinase family. As to quaternary structure, homodimer. It depends on Mg(2+) as a cofactor. Mn(2+) serves as cofactor.

The protein localises to the cytoplasm. The catalysed reaction is acetate + ATP = acetyl phosphate + ADP. It functions in the pathway metabolic intermediate biosynthesis; acetyl-CoA biosynthesis; acetyl-CoA from acetate: step 1/2. In terms of biological role, catalyzes the formation of acetyl phosphate from acetate and ATP. Can also catalyze the reverse reaction. In Erwinia tasmaniensis (strain DSM 17950 / CFBP 7177 / CIP 109463 / NCPPB 4357 / Et1/99), this protein is Acetate kinase.